Here is a 63-residue protein sequence, read N- to C-terminus: Large ribosomal subunit protein bL32 (63 aa).

Residues 1 to 45 (MAVQQNKKSRSRRDMRRSHDALTKPTLSVDPTTGETHLRHHMTPD) form a disordered region. Residues 7–16 (KKSRSRRDMR) show a composition bias toward basic residues. Residues 25–35 (PTLSVDPTTGE) are compositionally biased toward polar residues.

Belongs to the bacterial ribosomal protein bL32 family.

This is Large ribosomal subunit protein bL32 from Legionella pneumophila (strain Paris).